The sequence spans 180 residues: Dual-action ribosomal maturation protein DarP (180 aa).

Over residues 1–13 the composition is skewed to basic and acidic residues; that stretch reads MKPDKTENTEHGI. The tract at residues 1 to 21 is disordered; sequence MKPDKTENTEHGIEPVSKTKR.

Belongs to the DarP family.

The protein resides in the cytoplasm. Functionally, member of a network of 50S ribosomal subunit biogenesis factors which assembles along the 30S-50S interface, preventing incorrect 23S rRNA structures from forming. Promotes peptidyl transferase center (PTC) maturation. The chain is Dual-action ribosomal maturation protein DarP from Methylobacillus flagellatus (strain ATCC 51484 / DSM 6875 / VKM B-1610 / KT).